A 64-amino-acid polypeptide reads, in one-letter code: MSGREGGKKKPLKAPKKDSKDLDEDDMAFKQKQKEQQKALEAAKANASKKGPLVGGGIKKSGKK.

Positions 1–64 are disordered; it reads MSGREGGKKK…GGGIKKSGKK (64 aa). Basic and acidic residues predominate over residues 27–38; sequence MAFKQKQKEQQK. Residues 27–50 are a coiled coil; sequence MAFKQKQKEQQKALEAAKANASKK. Positions 39–50 are enriched in low complexity; sequence ALEAAKANASKK. The span at 53–64 shows a compositional bias: gly residues; sequence LVGGGIKKSGKK.

This Drosophila melanogaster (Fruit fly) protein is Translation machinery-associated protein 7 homolog.